We begin with the raw amino-acid sequence, 305 residues long: Putative glutamine amidotransferase MTH_191 (305 aa).

Residue C2 is part of the active site. Residues 2-305 form the Glutamine amidotransferase type-2 domain; it reads CGIAGVVYKD…SPGEVRVYEI (304 aa).

The protein is Putative glutamine amidotransferase MTH_191 of Methanothermobacter thermautotrophicus (strain ATCC 29096 / DSM 1053 / JCM 10044 / NBRC 100330 / Delta H) (Methanobacterium thermoautotrophicum).